A 370-amino-acid chain; its full sequence is Peptidyl-prolyl cis-trans isomerase D (370 aa).

At Ser-5 the chain carries Phosphoserine. A PPIase cyclophilin-type domain is found at 19–183 (FFDVDIGGER…KLCVIAECGE (165 aa)). Residue Lys-171 is modified to N6-acetyllysine. The interval 185–215 (KEGDDWGIFPKDGSGDSHPDFPEDADIDLKD) is chaperone activity. Ser-198 carries the post-translational modification Phosphoserine. The segment at 214–370 (KDVDKILLIS…EKAVYAKMFA (157 aa)) is interaction with HSP90AB1. TPR repeat units follow at residues 223-256 (SEDLKNIGNTFFKSQNWEMAIKKYAKVLRYVDSS), 273-306 (LSCVLNIGACKLKMSNWQGAIDSCLEALEMDPSN), and 307-340 (TKALYRKAQGWQGLKEYDQALADLKKAQEIAPGD).

Belongs to the cyclophilin-type PPIase family. PPIase D subfamily. As to quaternary structure, identified in ESR1 or NR3C1/GCR steroid receptor-chaperone complexes. Found in HSP90 chaperone complexes with kinase clients LCK or EIF2AK1. Two monomers associate with one HSP90 homodimer. Interacts with HSP90AA1. Interacts with HSP90AB1; PPID and FKBP4 compete for binding to HSP90AB1 and the interaction is mutually exclusive with the PPID:HSPA8 interaction. Interacts with HSPA8; PPID and STIP1 but not FKBP4 compete for binding to HSPA8 and the interaction is mutually exclusive with the PPID:HSP90AB1 interaction. Interacts with S100A1 and S100A2; the interactions dissociate the PPID:HSP90AA1 interaction. Interacts with S100A6. Interacts with MYB, ILF2, XRCC6, RACK1 and RPS3. Interacts with cytoplasmic dynein 1 intermediate chain (DYNC1I1 or DYNC1I2).

It is found in the cytoplasm. The protein localises to the nucleus. It localises to the nucleolus. Its subcellular location is the nucleoplasm. The enzyme catalyses [protein]-peptidylproline (omega=180) = [protein]-peptidylproline (omega=0). Less sensitive to inhibition by cyclosporin A than is CYP-18. Functionally, PPIase that catalyzes the cis-trans isomerization of proline imidic peptide bonds in oligopeptides and may therefore assist protein folding. Proposed to act as a co-chaperone in HSP90 complexes such as in unligated steroid receptors heterocomplexes. Different co-chaperones seem to compete for association with HSP90 thus establishing distinct HSP90-co-chaperone-receptor complexes with the potential to exert tissue-specific receptor activity control. May have a preference for estrogen receptor complexes and is not found in glucocorticoid receptor complexes. May be involved in cytoplasmic dynein-dependent movement of the receptor from the cytoplasm to the nucleus. May regulate MYB by inhibiting its DNA-binding activity. Involved in regulation of AHR signaling by promoting the formation of the AHR:ARNT dimer; the function is independent of HSP90 but requires the chaperone activity region. Involved in regulation of UV radiation-induced apoptosis. In Mus musculus (Mouse), this protein is Peptidyl-prolyl cis-trans isomerase D.